Consider the following 448-residue polypeptide: Tubulin beta chain (448 aa).

GTP is bound by residues Q11, E69, S138, G142, T143, G144, N204, and N226. E69 contributes to the Mg(2+) binding site. A disordered region spans residues 429–448; it reads SISDGEEQPYAEEAAYEAEE. Acidic residues predominate over residues 432–448; that stretch reads DGEEQPYAEEAAYEAEE.

The protein belongs to the tubulin family. As to quaternary structure, dimer of alpha and beta chains. A typical microtubule is a hollow water-filled tube with an outer diameter of 25 nm and an inner diameter of 15 nM. Alpha-beta heterodimers associate head-to-tail to form protofilaments running lengthwise along the microtubule wall with the beta-tubulin subunit facing the microtubule plus end conferring a structural polarity. Microtubules usually have 13 protofilaments but different protofilament numbers can be found in some organisms and specialized cells. The cofactor is Mg(2+).

It localises to the cytoplasm. It is found in the cytoskeleton. Tubulin is the major constituent of microtubules, a cylinder consisting of laterally associated linear protofilaments composed of alpha- and beta-tubulin heterodimers. Microtubules grow by the addition of GTP-tubulin dimers to the microtubule end, where a stabilizing cap forms. Below the cap, tubulin dimers are in GDP-bound state, owing to GTPase activity of alpha-tubulin. This is Tubulin beta chain from Aspergillus fumigatus (strain ATCC MYA-4609 / CBS 101355 / FGSC A1100 / Af293) (Neosartorya fumigata).